Consider the following 373-residue polypeptide: Aromatic amino acid aminotransferase (373 aa).

Position 212 is an N6-(pyridoxal phosphate)lysine (K212).

This sequence belongs to the class-II pyridoxal-phosphate-dependent aminotransferase family. In terms of assembly, homodimer. Pyridoxal 5'-phosphate serves as cofactor.

It carries out the reaction an aromatic L-alpha-amino acid + 2-oxoglutarate = an aromatic oxo-acid + L-glutamate. Functionally, aminotransferase that catalyzes the conversion of aromatic amino acids and 2-oxoglutarate into corresponding aromatic oxo acids and L-glutamate. The protein is Aromatic amino acid aminotransferase of Corynebacterium jeikeium (strain K411).